Consider the following 309-residue polypeptide: Manganese ABC transporter substrate-binding lipoprotein PsaA (309 aa).

The first 19 residues, 1 to 19 (MKKLGTLLVLFLSAIILVA), serve as a signal peptide directing secretion. Residue Cys20 is the site of N-palmitoyl cysteine attachment. The S-diacylglycerol cysteine moiety is linked to residue Cys20. The Mn(2+) site is built by His67, His139, Glu205, and Asp280.

The protein belongs to the bacterial solute-binding protein 9 family. Lipoprotein receptor antigen (Lrai) subfamily.

It localises to the cell membrane. In terms of biological role, part of the ATP-binding cassette (ABC) transport system PsaABC involved in manganese import. Binds manganese with high affinity and specificity and delivers it to the membrane permease for translocation into the cytoplasm. Also acts as an adhesin which is involved on adherence to extracellular matrix. It is an important factor in pathogenesis and infection. This Streptococcus pneumoniae serotype 4 (strain ATCC BAA-334 / TIGR4) protein is Manganese ABC transporter substrate-binding lipoprotein PsaA (psaA).